A 441-amino-acid polypeptide reads, in one-letter code: Malate dehydrogenase [NADP], chloroplastic (441 aa).

A chloroplast-targeting transit peptide spans 1 to 51; sequence MAVAELSPSYKTQLKTCQQLSSSLSTRLSDHRKFSLRLLPRPVSVRGGIRC. A disulfide bridge links Cys-75 with Cys-80. 104 to 110 is a binding site for NADP(+); the sequence is GAAGMIS. Substrate-binding residues include Arg-185 and Arg-191. NADP(+) is bound at residue Asn-198. Gln-205 lines the NAD(+) pocket. 222–224 contributes to the NADP(+) binding site; it reads VGN. Substrate-binding residues include Asn-224 and Arg-255. His-280 (proton acceptor) is an active-site residue. Cys-416 and Cys-428 form a disulfide bridge.

Belongs to the LDH/MDH superfamily. MDH type 2 family. As to quaternary structure, homodimer.

The protein localises to the plastid. Its subcellular location is the chloroplast. The enzyme catalyses (S)-malate + NADP(+) = oxaloacetate + NADPH + H(+). Its activity is regulated as follows. Chloroplast NADP-MDH is activated upon illumination. In order to be enzymatically active, disulfide bridges on the protein must be reduced by thioredoxin which receives electrons from ferredoxin and the electron transport system of photosynthesis. In terms of biological role, the chloroplastic, NADP-dependent form is essential for the photosynthesis C4 cycle, which allows plants to circumvent the problem of photorespiration. In C4 plants, NADP-MDH activity acts to convert oxaloacetate to malate in chloroplasts of mesophyll cells for transport to the bundle sheath cells. The sequence is that of Malate dehydrogenase [NADP], chloroplastic (MDH1) from Mesembryanthemum crystallinum (Common ice plant).